The chain runs to 719 residues: Polyribonucleotide nucleotidyltransferase (719 aa).

Residues aspartate 507 and aspartate 513 each coordinate Mg(2+). The 61-residue stretch at 573–633 folds into the KH domain; that stretch reads PKLELFSVDP…EQIKAAKDYI (61 aa). Residues 658–719 enclose the S1 motif domain; sequence GQEFQGIVKK…NGKISVDLCE (62 aa).

It belongs to the polyribonucleotide nucleotidyltransferase family. It depends on Mg(2+) as a cofactor.

It is found in the cytoplasm. It catalyses the reaction RNA(n+1) + phosphate = RNA(n) + a ribonucleoside 5'-diphosphate. Its function is as follows. Involved in mRNA degradation. Catalyzes the phosphorolysis of single-stranded polyribonucleotides processively in the 3'- to 5'-direction. In Campylobacter jejuni (strain RM1221), this protein is Polyribonucleotide nucleotidyltransferase.